We begin with the raw amino-acid sequence, 470 residues long: Chromosomal replication initiator protein DnaA (470 aa).

The segment at 1–89 is domain I, interacts with DnaA modulators; the sequence is MIESNHVVLW…YNVMVDKTSI (89 aa). Residues 89–130 form a domain II region; sequence IPNQTVNLEASNRSTAVTPKSIVGGNKAPSFLKAPAVQDLDP. Positions 131-348 are domain III, AAA+ region; it reads HLNPNYNFEN…GIVIAIMARS (218 aa). Positions 176, 178, 179, and 180 each coordinate ATP. Positions 349 to 470 are domain IV, binds dsDNA; sequence TIFNKEIDLD…EIESLLKKKA (122 aa).

This sequence belongs to the DnaA family. Oligomerizes as a right-handed, spiral filament on DNA at oriC.

It is found in the cytoplasm. Its function is as follows. Plays an essential role in the initiation and regulation of chromosomal replication. ATP-DnaA binds to the origin of replication (oriC) to initiate formation of the DNA replication initiation complex once per cell cycle. Binds the DnaA box (a 9 base pair repeat at the origin) and separates the double-stranded (ds)DNA. Forms a right-handed helical filament on oriC DNA; dsDNA binds to the exterior of the filament while single-stranded (ss)DNA is stabiized in the filament's interior. The ATP-DnaA-oriC complex binds and stabilizes one strand of the AT-rich DNA unwinding element (DUE), permitting loading of DNA polymerase. After initiation quickly degrades to an ADP-DnaA complex that is not apt for DNA replication. Binds acidic phospholipids. The sequence is that of Chromosomal replication initiator protein DnaA from Bacteroides thetaiotaomicron (strain ATCC 29148 / DSM 2079 / JCM 5827 / CCUG 10774 / NCTC 10582 / VPI-5482 / E50).